Consider the following 676-residue polypeptide: Probable ERAD-associated E3 ubiquitin-protein ligase ASI1 (676 aa).

Topologically, residues methionine 1 to arginine 78 are perinuclear space. N-linked (GlcNAc...) asparagine glycosylation is found at asparagine 24, asparagine 34, asparagine 46, and asparagine 66. The chain crosses the membrane as a helical span at residues methionine 79–leucine 99. Residues asparagine 100–histidine 126 are Nuclear-facing. Residues leucine 127–methionine 147 traverse the membrane as a helical segment. Topologically, residues histidine 148–aspartate 156 are perinuclear space. Residues phenylalanine 157–serine 177 traverse the membrane as a helical segment. The Nuclear segment spans residues serine 178 to asparagine 181. The helical transmembrane segment at valine 182–isoleucine 202 threads the bilayer. Residues serine 203 to proline 277 lie on the Perinuclear space side of the membrane. A helical transmembrane segment spans residues glycine 278 to phenylalanine 298. The Nuclear segment spans residues threonine 299–valine 676. Residues cysteine 624–aspartate 664 form an RING-type; atypical zinc finger.

As to quaternary structure, component of the Asi complex, which contains ASI1, ASI2 and ASI3. Interacts directly with ASI1.

It localises to the nucleus inner membrane. The enzyme catalyses S-ubiquitinyl-[E2 ubiquitin-conjugating enzyme]-L-cysteine + [acceptor protein]-L-lysine = [E2 ubiquitin-conjugating enzyme]-L-cysteine + N(6)-ubiquitinyl-[acceptor protein]-L-lysine.. In terms of biological role, part of the nuclear inner membrane (INM)-specific branch of the ER-associated degradation (ERAD) pathway, required for the elimination of misfolded proteins in the INM, a specialized ER subdomain. Required for ERG11 degradation. Negative regulator of SPS-sensor signaling. Together with ASI2 and ASI3, prevents the unprocessed precursor forms of STP1 and STP2 that escape cytoplasmic anchoring from inducing SPS-sensor-regulated genes in the absence of inducing signals. Controls amino acid permease (AAP) gene expression in response to amino acid availability, a process mediated by the transcription factors STP1 and STP1. This is Probable ERAD-associated E3 ubiquitin-protein ligase ASI1 (ASI3) from Saccharomyces cerevisiae (strain ATCC 204508 / S288c) (Baker's yeast).